Reading from the N-terminus, the 143-residue chain is uncharacterized protein (143 aa).

The chain crosses the membrane as a helical span at residues 4-24 (FGIVALSIICSIAFLFVAYGV). The segment at 97 to 143 (TVPFVNTEAPPPRLSSSFSRQSGENAETQSQVSASPFNDKNSPYVQE) is disordered. Polar residues predominate over residues 110 to 143 (LSSSFSRQSGENAETQSQVSASPFNDKNSPYVQE).

The protein localises to the golgi apparatus membrane. This is an uncharacterized protein from Schizosaccharomyces pombe (strain 972 / ATCC 24843) (Fission yeast).